The primary structure comprises 338 residues: Ribosomal RNA small subunit methyltransferase H (338 aa).

S-adenosyl-L-methionine-binding positions include glycine 46–tyrosine 48, aspartate 63, phenylalanine 90, aspartate 106, and glutamine 113.

It belongs to the methyltransferase superfamily. RsmH family.

It localises to the cytoplasm. It catalyses the reaction cytidine(1402) in 16S rRNA + S-adenosyl-L-methionine = N(4)-methylcytidine(1402) in 16S rRNA + S-adenosyl-L-homocysteine + H(+). Specifically methylates the N4 position of cytidine in position 1402 (C1402) of 16S rRNA. This Mesorhizobium japonicum (strain LMG 29417 / CECT 9101 / MAFF 303099) (Mesorhizobium loti (strain MAFF 303099)) protein is Ribosomal RNA small subunit methyltransferase H.